Consider the following 363-residue polypeptide: Ribosomal RNA large subunit methyltransferase M (363 aa).

S-adenosyl-L-methionine is bound by residues S190, 223 to 226 (CPGG), D242, D262, and D280. K309 (proton acceptor) is an active-site residue.

The protein belongs to the class I-like SAM-binding methyltransferase superfamily. RNA methyltransferase RlmE family. RlmM subfamily. In terms of assembly, monomer.

The protein resides in the cytoplasm. It carries out the reaction cytidine(2498) in 23S rRNA + S-adenosyl-L-methionine = 2'-O-methylcytidine(2498) in 23S rRNA + S-adenosyl-L-homocysteine + H(+). Catalyzes the 2'-O-methylation at nucleotide C2498 in 23S rRNA. This Actinobacillus pleuropneumoniae serotype 5b (strain L20) protein is Ribosomal RNA large subunit methyltransferase M.